Consider the following 113-residue polypeptide: Putative membrane protein insertion efficiency factor (113 aa).

The protein belongs to the UPF0161 family.

It is found in the cell inner membrane. Could be involved in insertion of integral membrane proteins into the membrane. The sequence is that of Putative membrane protein insertion efficiency factor from Campylobacter jejuni subsp. jejuni serotype O:2 (strain ATCC 700819 / NCTC 11168).